A 1708-amino-acid chain; its full sequence is Rapamycin-insensitive companion of mTOR (1708 aa).

Residues 1 to 789 form an interaction with NBN region; sequence MAAIGRGRSL…DKANLHALIQ (789 aa). S21, S35, and S265 each carry phosphoserine. K274 participates in a covalent cross-link: Glycyl lysine isopeptide (Lys-Gly) (interchain with G-Cter in ubiquitin). The segment at 521–570 is ribosome-binding domain; that stretch reads LKDTEEALLINLRDSQVLQHKENLEWNWNLIGTILKWPNVNLRNYKDEQL. 3 residues coordinate ATP: N543, R572, and R576. Residues 1022-1041 form a disordered region; sequence LSLNSESTSSRHNSESESVP. Residues K1092 and K1095 each carry the N6-acetyllysine modification. T1103 is modified (phosphothreonine). The interval 1103 to 1134 is disordered; it reads TLPNKKHRSSSDPKGGKLSSESKTSNRRIRTL. An N6-acetyllysine mark is found at K1116, K1119, and K1125. T1135 is subject to Phosphothreonine; by RPS6KB1. A phosphoserine mark is found at S1138, S1162, and S1219. Residues 1204-1252 form a disordered region; sequence VVESSTSSHMKIRSQSFNTDTTTSGISSMSSSPSRETVGVDATTMDTDC. A compositionally biased stretch (polar residues) spans 1206 to 1221; sequence ESSTSSHMKIRSQSFN. Over residues 1222–1240 the composition is skewed to low complexity; that stretch reads TDTTTSGISSMSSSPSRET. S1235 is modified (phosphoserine; by GSK3-beta). T1271 is subject to Phosphothreonine. Phosphoserine is present on residues S1274, S1278, S1282, and S1284. Low complexity predominate over residues 1275-1288; sequence NHLSLSKSNSVSLV. Residues 1275-1298 are disordered; that stretch reads NHLSLSKSNSVSLVPPGSSHTLPR. The residue at position 1295 (T1295) is a Phosphothreonine. 2 positions are modified to phosphoserine: S1302 and S1313. A Phosphothreonine modification is found at T1332. Residues S1346 and S1353 each carry the phosphoserine modification. T1376 carries the post-translational modification Phosphothreonine. Phosphoserine is present on S1385. Residue Y1386 is modified to Phosphotyrosine. Phosphoserine occurs at positions 1388, 1396, and 1411. 3 residues coordinate Zn(2+): H1515, C1520, and C1523. Phosphoserine is present on residues S1571, S1574, S1577, and S1591. Zn(2+) is bound at residue C1651. T1695 is modified (phosphothreonine; by GSK3-alpha and GSK3-beta).

Belongs to the RICTOR family. As to quaternary structure, component of the mechanistic target of rapamycin complex 2 (mTORC2), consisting in two heterotretramers composed of MTOR, MLST8, RICTOR and MAPKAP1/SIN1. The mTORC2 core complex associates with PRR5/PROTOR1 and/or PRR5L/PROTOR2. Contrary to mTORC1, mTORC2 does not bind to and is not sensitive to FKBP12-rapamycin. Binds directly to MTOR and PRR5 within the TORC2 complex; interaction with MTOR is enhanced by deubiquitination of RICTOR by USP9X. Interaction with MAPKAP1 is not enhanced by RICTOR deubiquitination by USP9X. Interacts with CCDC28B. Interacts with NBN. Interacts with SIK3. Interacts with NCKAP1L. Interacts with kinases GSK3A and GSK3B; the interactions lead to phosphorylation of RICTOR at Thr-1695 which facilitates its FBXW7-mediated ubiquitination and subsequent degradation. Interacts with FBXW7; the interaction is enhanced by GSK3-mediated phosphorylation of Thr-1695 and results in RICTOR ubiquitination and degradation. Interacts with ARMH4 (via cytoplasmic tail); this interaction bridges ARMH4 to the mTORC2 complex and inhibits the mTORC2 kinase activity. Interacts with UBXN2A. Interacts with TSPAN8. (Microbial infection) Interacts with vaccinia virus protein F17; this interaction dysregulates MTOR. Phosphorylated by MTOR; when part of mTORC2. Phosphorylated at Thr-1135 by RPS6KB1 downstream of the mTORC1 complex: phosphorylation of RICTOR inhibits mTORC2 signaling by creating a binding site for 14-3-3 proteins. Phosphorylated at Thr-1695 by GSK3A and GSK3B which facilitates RICTOR ubiquitination and subsequent degradation. Phosphorylated at Ser-1235 by GSK3B in response to endoplasmic stress, inhibiting mTORC2 signaling. In terms of processing, ubiquitinated by the SCF(FBXW7) complex, leading to its degradation by the proteasome. Deubiquitinated by USP9X; deubiquitination stabilizes RICTOR and enhances its binding to MTOR, thus promoting mTORC2 complex assembly. Post-translationally, acetylated by EP300/p300 in response to glucose, leading to activate the mTORC2 complex. Acetylation by BLOC1S1/GCN5L1 in response to hypotoxic stress protects RICTOR against ubiquitination and subsequent degradation by the proteasome.

It localises to the cell membrane. The protein resides in the endoplasmic reticulum membrane. The protein localises to the lysosome membrane. Its function is as follows. Component of the mechanistic target of rapamycin complex 2 (mTORC2), which transduces signals from growth factors to pathways involved in proliferation, cytoskeletal organization, lipogenesis and anabolic output. In response to growth factors, mTORC2 phosphorylates and activates AGC protein kinase family members, including AKT (AKT1, AKT2 and AKT3), PKC (PRKCA, PRKCB and PRKCE) and SGK1. In contrast to mTORC1, mTORC2 is nutrient-insensitive. Within the mTORC2 complex, RICTOR probably acts as a molecular adapter. RICTOR is responsible for the FKBP12-rapamycin-insensitivity of mTORC2. mTORC2 plays a critical role in AKT1 activation by mediating phosphorylation of different sites depending on the context, such as 'Thr-450', 'Ser-473', 'Ser-477' or 'Thr-479', facilitating the phosphorylation of the activation loop of AKT1 on 'Thr-308' by PDPK1/PDK1 which is a prerequisite for full activation. mTORC2 catalyzes the phosphorylation of SGK1 at 'Ser-422' and of PRKCA on 'Ser-657'. The mTORC2 complex also phosphorylates various proteins involved in insulin signaling, such as FBXW8 and IGF2BP1. mTORC2 acts upstream of Rho GTPases to regulate the actin cytoskeleton, probably by activating one or more Rho-type guanine nucleotide exchange factors. mTORC2 promotes the serum-induced formation of stress-fibers or F-actin. The sequence is that of Rapamycin-insensitive companion of mTOR from Homo sapiens (Human).